A 327-amino-acid polypeptide reads, in one-letter code: MVVLAGPPAVDHIPLLRSPDPGDVFSGVPVVDLGSPGAARAVVDACERYGFFKVVNHGVATDTMDKAESEAVRFFSQTQPDKDRSGPAYPFGYGSKRIGFNGDMGWLEYLLLALDDASLADACTVPSCAVFRAALNEYISGVRKVAVRVMEAMSEGLGIAQADALSALVTAEGSDQVFRVNHYPPCRALQGLGCSVTGFGEHTDPQLVSVLRSNGTSGLQIALRDGQWVSVPSDRDSFFVNVGDSLQVLTNGRFKSVKHRVVANSLKSRVSFIYFGGPPLAQRIAPLPQLLGEGEQSLYKEFTWDEYKKAAYKSRLGDNRLAQFEKK.

The 106-residue stretch at 173–278 (GSDQVFRVNH…RVSFIYFGGP (106 aa)) folds into the Fe2OG dioxygenase domain. Residue Tyr183 participates in 2-oxoglutarate binding. 3 residues coordinate Fe cation: His202, Asp204, and His259. Positions 269 and 271 each coordinate 2-oxoglutarate.

It belongs to the iron/ascorbate-dependent oxidoreductase family. GA2OX subfamily. L-ascorbate serves as cofactor. It depends on Fe(2+) as a cofactor. As to expression, expressed in roots, shoot apex, leaf blades, leaf sheaths, stems and flowers.

It carries out the reaction gibberellin A1 + 2-oxoglutarate + O2 = gibberellin A8 + succinate + CO2. Functionally, catalyzes the 2-beta-hydroxylation of several biologically active gibberellins, leading to the homeostatic regulation of their endogenous level. Catabolism of gibberellins (GAs) plays a central role in plant development. In vitro, converts GA1, GA20, and GA29 to the corresponding 2-beta-hydroxylated products GA8, GA29-catabolite, respectively. This is Gibberellin 2-beta-dioxygenase 3 from Oryza sativa subsp. japonica (Rice).